Here is a 72-residue protein sequence, read N- to C-terminus: Cytochrome b-c1 complex subunit 9 (72 aa).

At 1–27 (MESAARRSGGGVLEGFYRLVMRRTPVY) the chain is on the mitochondrial matrix side. The chain crosses the membrane as a helical span at residues 28–53 (VTFVIAGALLGERAVDYGVKTLWEKN). The Mitochondrial intermembrane segment spans residues 54–72 (NVGKRYEDISVLGQRPVDE).

It belongs to the UQCR10/QCR9 family. As to quaternary structure, component of the ubiquinol-cytochrome c oxidoreductase (cytochrome b-c1 complex, complex III, CIII), a multisubunit enzyme composed of 3 respiratory subunits cytochrome b, cytochrome c1 and Rieske protein, 2 core protein subunits, and additional low-molecular weight protein subunits. The complex exists as an obligatory dimer and forms supercomplexes (SCs) in the inner mitochondrial membrane with cytochrome c oxidase (complex IV, CIV).

The protein localises to the mitochondrion inner membrane. Component of the ubiquinol-cytochrome c oxidoreductase, a multisubunit transmembrane complex that is part of the mitochondrial electron transport chain which drives oxidative phosphorylation. The respiratory chain contains 3 multisubunit complexes succinate dehydrogenase (complex II, CII), ubiquinol-cytochrome c oxidoreductase (cytochrome b-c1 complex, complex III, CIII) and cytochrome c oxidase (complex IV, CIV), that cooperate to transfer electrons derived from NADH and succinate to molecular oxygen, creating an electrochemical gradient over the inner membrane that drives transmembrane transport and the ATP synthase. The cytochrome b-c1 complex catalyzes electron transfer from ubiquinol to cytochrome c, linking this redox reaction to translocation of protons across the mitochondrial inner membrane, with protons being carried across the membrane as hydrogens on the quinol. In the process called Q cycle, 2 protons are consumed from the matrix, 4 protons are released into the intermembrane space and 2 electrons are passed to cytochrome c. The sequence is that of Cytochrome b-c1 complex subunit 9 from Solanum tuberosum (Potato).